The chain runs to 336 residues: Ferredoxin--NADP reductase 1 (336 aa).

Residues Glu37, Lys45, Phe50, Val90, Leu125, Asp287, and Thr328 each coordinate FAD.

It belongs to the ferredoxin--NADP reductase type 2 family. In terms of assembly, homodimer. FAD is required as a cofactor.

It carries out the reaction 2 reduced [2Fe-2S]-[ferredoxin] + NADP(+) + H(+) = 2 oxidized [2Fe-2S]-[ferredoxin] + NADPH. This is Ferredoxin--NADP reductase 1 from Bacillus velezensis (strain DSM 23117 / BGSC 10A6 / LMG 26770 / FZB42) (Bacillus amyloliquefaciens subsp. plantarum).